The following is a 996-amino-acid chain: Low-density lipoprotein receptor-related protein 8 (996 aa).

Positions 1-28 (MGRPELGALRPLALLLLLLLQLQHLSAA) are cleaved as a signal peptide. The Extracellular portion of the chain corresponds to 29–858 (DPLPGGQGPV…GSQMGSTVTA (830 aa)). 8 consecutive LDL-receptor class A domains span residues 40 to 76 (ECEE…DDCP), 79 to 117 (TCAD…ATCS), 120 to 158 (ECPA…AGCP), 160 to 196 (LCAP…RGCS), 199 to 238 (ACPP…ELCG), 250 to 287 (ACAP…ADCS), 290 to 326 (PCRE…AGCL), and 330 to 369 (TCEG…KVCG). 30 disulfide bridges follow: cysteine 41/cysteine 53, cysteine 48/cysteine 66, cysteine 60/cysteine 75, cysteine 80/cysteine 92, cysteine 87/cysteine 105, cysteine 99/cysteine 116, cysteine 121/cysteine 135, cysteine 128/cysteine 148, cysteine 142/cysteine 157, cysteine 161/cysteine 173, cysteine 168/cysteine 186, cysteine 180/cysteine 195, cysteine 200/cysteine 213, cysteine 207/cysteine 226, cysteine 220/cysteine 237, cysteine 251/cysteine 264, cysteine 259/cysteine 277, cysteine 271/cysteine 286, cysteine 291/cysteine 303, cysteine 298/cysteine 316, cysteine 310/cysteine 325, cysteine 331/cysteine 344, cysteine 339/cysteine 357, cysteine 351/cysteine 368, cysteine 373/cysteine 384, cysteine 380/cysteine 393, cysteine 395/cysteine 407, cysteine 413/cysteine 423, cysteine 419/cysteine 432, and cysteine 434/cysteine 447. Residues tryptophan 58, aspartate 61, aspartate 63, aspartate 65, aspartate 71, and glutamate 72 each contribute to the Ca(2+) site. Asparagine 170 is a glycosylation site (N-linked (GlcNAc...) asparagine). The 45-residue stretch at 364-408 (PQKVCGLNECLHNNGGCSHICTDLKIGFECTCPAGFQLLDQKTCG) folds into the EGF-like 1 domain. One can recognise an EGF-like 2; calcium-binding domain in the interval 409–448 (DIDECQDPDACSQICVNYKGYFKCECHPGYEMDTLTKNCK). LDL-receptor class B repeat units follow at residues 495–541 (NRIY…DWVH), 542–584 (KHIY…DPLR), 585–628 (GFMY…DLLS), 629–671 (QRLY…AVFE), and 672–714 (DKVF…FHEL). N-linked (GlcNAc...) asparagine glycosylation occurs at asparagine 551. A clustered O-linked oligosaccharides region spans residues 773–831 (STSTTTLASAMTRTVPATTRAPGTTIHDPTYQNHSTETPSQTAAAPHSVNVPRAPSTSP). The disordered stretch occupies residues 778–851 (TLASAMTRTV…SQHYGNEGSQ (74 aa)). Polar residues predominate over residues 802-815 (TYQNHSTETPSQTA). N-linked (GlcNAc...) asparagine glycosylation occurs at asparagine 805. Positions 824-839 (PRAPSTSPSTPSPATS) are enriched in low complexity. Asparagine 840 carries an N-linked (GlcNAc...) asparagine glycan. Positions 840–851 (NHSQHYGNEGSQ) are enriched in polar residues. A helical membrane pass occupies residues 859–881 (AVIGVIVPIVVIALLCMSGYLIW). Residues 882 to 996 (RNWKRKNTKS…ALSLEDDGLP (115 aa)) are Cytoplasmic-facing.

This sequence belongs to the LDLR family. As to quaternary structure, homooligomer. Interacts with VLDLR. Reelin associates with two or more receptor molecules. Interacts with DAB1 and JNK-interacting proteins. Interacts with SNX17. Interacts with PCSK9. Interacts with MDK; this interaction is calcium dependent. Interacts with CLU. Post-translationally, O-glycosylated. Some alternatively spliced isoforms lack the O-linked sugar domain. Undergoes sequential, furin and gamma-secretase dependent, proteolytic processing, resulting in the extracellular release of the entire ligand-binding domain as a soluble polypeptide and in the intracellular domain (ICD) release into the cytoplasm. The gamma-secretase-dependent proteolytical processing occurs after the bulk of the extracellular domain has been shed, in a furin-dependent manner, in alternatively spliced isoforms carrying the furin cleavage site. Hypoglycosylation (mainly hypo-O-glycosylation) leads to increased extracellular cleavage, which in turn results in accelerating release of the intracellular domain (ICD) by the gamma-secretase. The resulting receptor fragment is able to inhibit Reelin signaling and in particular the Reelin-induced DAB1 phosphorylation. In terms of processing, tyrosine phosphorylated upon apoE binding. Post-translationally, ubiquitinated by MYLIP leading to degradation. Expressed in neurons throughout the brain, with strong expression in pyramidal neurons of the hippocampus, granule cells of the dentate gyrus, cortical neurons and Purkinje cells of the cerebellum. Also expressed in the epithelium of the choroid plexus and of the blood vessels (apical expression), as well as in the epididymis.

It is found in the cell membrane. Its subcellular location is the secreted. In terms of biological role, cell surface receptor for Reelin (RELN) and apolipoprotein E (apoE)-containing ligands. LRP8 participates in transmitting the extracellular Reelin signal to intracellular signaling processes, by binding to DAB1 on its cytoplasmic tail. Reelin acts via both the VLDL receptor (VLDLR) and LRP8 to regulate DAB1 tyrosine phosphorylation and microtubule function in neurons. LRP8 has higher affinity for Reelin than VLDLR. LRP8 is thus a key component of the Reelin pathway which governs neuronal layering of the forebrain during embryonic brain development. Binds the endoplasmic reticulum resident receptor-associated protein (RAP). Binds dimers of beta 2-glycoprotein I and may be involved in the suppression of platelet aggregation in the vasculature. Highly expressed in the initial segment of the epididymis, where it affects the functional expression of clusterin and phospholipid hydroperoxide glutathione peroxidase (PHGPx), two proteins required for sperm maturation. May also function as an endocytic receptor. Not required for endocytic uptake of SEPP1 in the kidney which is mediated by LRP2. Together with its ligand, apolipoprotein E (apoE), may indirectly play a role in the suppression of the innate immune response by controlling the survival of myeloid-derived suppressor cells. The polypeptide is Low-density lipoprotein receptor-related protein 8 (Lrp8) (Mus musculus (Mouse)).